Here is a 113-residue protein sequence, read N- to C-terminus: uncharacterized protein (113 aa).

The next 2 membrane-spanning stretches (helical) occupy residues methionine 1–tryptophan 21 and isoleucine 48–valine 68.

The protein to M.tuberculosis Rv0039.

It is found in the cell membrane. This is an uncharacterized protein from Mycobacterium leprae (strain TN).